We begin with the raw amino-acid sequence, 648 residues long: Cell surface glycoprotein MUC18 (648 aa).

An N-terminal signal peptide occupies residues 1–23; the sequence is MGLPKLVCVFLFAACCCCRRAAG. Ig-like V-type domains follow at residues 24–131 and 141–244; these read VPGE…HYVE and PTIQ…KEVT. Residues 24–563 are Extracellular-facing; it reads VPGEEKQPVP…LPQPESKGVV (540 aa). Disulfide bonds link C50/C118, C163/C225, C274/C322, C367/C409, and C454/C501. N58 is a glycosylation site (N-linked (GlcNAc...) asparagine). 3 consecutive Ig-like C2-type domains span residues 246–332, 337–426, and 432–512; these read PVFY…TTIT, PLEL…QLVS, and SPWM…SNTT. The segment at 281 to 304 is disordered; it reads QPHFTINKKDPSTGEMEEESTDEN. A glycan (N-linked (GlcNAc...) asparagine) is linked at N510. Positions 532–549 are enriched in polar residues; it reads TGLSTLTVSPHTRANSTS. The tract at residues 532–554 is disordered; the sequence is TGLSTLTVSPHTRANSTSTEKKL. Residues 564-584 traverse the membrane as a helical segment; sequence IVAVIVCTLVLAVLGAALYFF. Residues 585–648 lie on the Cytoplasmic side of the membrane; sequence YKKGKLPCGR…QGEKYIDLRH (64 aa). A phosphoserine mark is found at S608 and S616. The tract at residues 625–648 is disordered; it reads LLQGSNGDKRAPGDQGEKYIDLRH. Residues 631–648 show a composition bias toward basic and acidic residues; it reads GDKRAPGDQGEKYIDLRH.

Detected in melanoma cell lines.

Its subcellular location is the membrane. Plays a role in cell adhesion, and in cohesion of the endothelial monolayer at intercellular junctions in vascular tissue. Its expression may allow melanoma cells to interact with cellular elements of the vascular system, thereby enhancing hematogeneous tumor spread. Could be an adhesion molecule active in neural crest cells during embryonic development. Acts as a surface receptor that triggers tyrosine phosphorylation of FYN and PTK2/FAK1, and a transient increase in the intracellular calcium concentration. The sequence is that of Cell surface glycoprotein MUC18 (Mcam) from Mus musculus (Mouse).